Consider the following 278-residue polypeptide: Undecaprenyl-diphosphatase 2 (278 aa).

The next 7 membrane-spanning stretches (helical) occupy residues 1–21, 38–58, 85–105, 118–138, 191–211, 223–243, and 251–271; these read MSIIEAIIIGIVQGITEFLPI, FPGFGFEIFLHIASILAVILY, FMFAIYIIVATGITGVLGLLL, FIAGALIITGTFLIIIERFFV, SFLLSIPVILGTSVLAIGDLL, PLIISFIVTFFFSWLGIIWLI, and LIYFAFYCFALAIFVFFYFDH.

It belongs to the UppP family.

It localises to the cell membrane. The catalysed reaction is di-trans,octa-cis-undecaprenyl diphosphate + H2O = di-trans,octa-cis-undecaprenyl phosphate + phosphate + H(+). Functionally, catalyzes the dephosphorylation of undecaprenyl diphosphate (UPP). Confers resistance to bacitracin. The protein is Undecaprenyl-diphosphatase 2 of Halalkalibacterium halodurans (strain ATCC BAA-125 / DSM 18197 / FERM 7344 / JCM 9153 / C-125) (Bacillus halodurans).